Consider the following 542-residue polypeptide: TOM1-like protein 7 (542 aa).

One can recognise a VHS domain in the interval 29–158; the sequence is ATSELLRTPD…ELKRCGVKFP (130 aa). A Phosphoserine modification is found at Ser161. A GAT domain is found at 201–289; the sequence is EIESLSLSSL…VLARHDAIAS (89 aa). The segment at 303–340 is disordered; that stretch reads RETSSSLKTCGAAALESADSESSSSSSSSESETDEVED. The segment covering 314 to 332 has biased composition (low complexity); it reads AAALESADSESSSSSSSSE. A Phosphoserine modification is found at Ser521. A disordered region spans residues 522-542; the sequence is FPARATGTSGAATAATVDRQP. A compositionally biased stretch (low complexity) spans 524–542; that stretch reads ARATGTSGAATAATVDRQP.

It belongs to the TOM1 family. Preferentially expressed in flowers.

Its subcellular location is the membrane. Its function is as follows. Might contribute to the loading of the ESCRT machinery. This Arabidopsis thaliana (Mouse-ear cress) protein is TOM1-like protein 7.